The primary structure comprises 225 residues: Helicostatins (225 aa).

A signal peptide spans 1-18 (MLYSSLPVCFLVLGAALC). Residues 19–48 (APERMQNEAEPHDLQPHEAEPHSDHVAPLA) constitute a propeptide that is removed on maturation. Residues L58, L79, and L90 each carry the leucine amide modification. Residues 94 to 127 (SVDEDQSNDEQQLTTSDLDQAALAELFDQYDDAE) constitute a propeptide that is removed on maturation. The residue at position 137 (L137) is a Leucine amide. The propeptide occupies 141–149 (FADDETSEE). Leucine amide occurs at positions 159, 170, 181, 192, and 206. Positions 205–225 (GLGKRSGDDVSADDSDNYFDV) are disordered. Residues 210–225 (SGDDVSADDSDNYFDV) constitute a propeptide that is removed on maturation. Acidic residues predominate over residues 214-225 (VSADDSDNYFDV).

The protein belongs to the allatostatin family. In terms of tissue distribution, highly expressed in the CNS and gut of larvae. Also expressed in the cells of the larval brain and ventral nerve cord and in endocrine cells of the midgut.

The protein localises to the secreted. May act as a neurotransmitter or neuromodulator. The chain is Helicostatins from Helicoverpa armigera (Cotton bollworm).